A 222-amino-acid polypeptide reads, in one-letter code: Thiopurine S-methyltransferase (222 aa).

Positions 10, 45, 66, and 126 each coordinate S-adenosyl-L-methionine.

This sequence belongs to the class I-like SAM-binding methyltransferase superfamily. TPMT family.

It localises to the cytoplasm. It catalyses the reaction S-adenosyl-L-methionine + a thiopurine = S-adenosyl-L-homocysteine + a thiopurine S-methylether.. This chain is Thiopurine S-methyltransferase, found in Shewanella piezotolerans (strain WP3 / JCM 13877).